The following is a 343-amino-acid chain: uncharacterized protein (343 aa).

The disordered stretch occupies residues 66 to 89 (TQNPEPTSASTPPSASASSLPNGA). The segment covering 71–84 (PTSASTPPSASASS) has biased composition (low complexity). The helical transmembrane segment at 96-116 (GVIAGPIVGVLGGLIVLVIIF) threads the bilayer. Disordered regions lie at residues 161 to 191 (GGYQ…NDTR) and 252 to 343 (GRPL…SEHF). The span at 165–188 (MHSTPWASSPRNSTIPQRSQSFYN) shows a compositional bias: polar residues. Basic and acidic residues predominate over residues 280 to 289 (SNDDSDETKL). Low complexity predominate over residues 290-299 (KQSSTESSSE). Basic and acidic residues-rich tracts occupy residues 301–311 (LDEKDKFDKNS) and 322–333 (SSYEHEISEEHK). A compositionally biased stretch (basic residues) spans 334-343 (KHSKKRSEHF).

Its subcellular location is the golgi apparatus membrane. This is an uncharacterized protein from Schizosaccharomyces pombe (strain 972 / ATCC 24843) (Fission yeast).